A 1222-amino-acid chain; its full sequence is Kinesin-related protein 9 (1222 aa).

Positions 1 to 25 (MDNNNNNFSTPKQPTINSTTGGQLR) are enriched in polar residues. 3 disordered regions span residues 1–55 (MDNN…ITNS), 75–165 (MDSL…STNI), and 188–343 (SSNT…TQPL). Over residues 26 to 55 (SRSNSSPSTSSISTPRNGSTTATTSSITNS) the composition is skewed to low complexity. Residues 75-85 (MDSLSTPMSQS) show a composition bias toward polar residues. Low complexity-rich tracts occupy residues 122-165 (SFIS…STNI), 194-209 (SSLP…PLSN), 216-238 (NHHL…ISTT), and 254-325 (NLTT…RTPI). The span at 326–343 (QNFNSVGGVNITSKTQPL) shows a compositional bias: polar residues. One can recognise a Kinesin motor domain in the interval 350 to 719 (SIQAVCRFRP…LNFGQRAQSV (370 aa)). 438 to 445 (GQTGAGKT) lines the ATP pocket. Positions 724-1026 (LQNVEESHSE…DTLTNKLEIQ (303 aa)) form a coiled coil. The interval 1144 to 1174 (NINNNNNIKNNNNNNKLKSKKVGSSSSSSSN) is disordered. The helical transmembrane segment at 1183–1203 (ILFFLIILVILFFLMVAVGLT) threads the bilayer.

Belongs to the TRAFAC class myosin-kinesin ATPase superfamily. Kinesin family.

It localises to the membrane. The protein localises to the cytoplasm. It is found in the cytoskeleton. Its function is as follows. Microtubule-associated force-producing protein that plays a role in organelle transport. Its motor activity is directed toward the microtubule's plus end. In Dictyostelium discoideum (Social amoeba), this protein is Kinesin-related protein 9 (kif9).